The chain runs to 95 residues: Corticostatin-3 (95 aa).

An N-terminal signal peptide occupies residues 1-19 (MRTLALLAAILLVALQAQA). Positions 20-62 (EHVSVSIDEVVDQQPPQAEDQDVAIYVKEHESSALEALGVKAG) are excised as a propeptide. 3 cysteine pairs are disulfide-bonded: C65–C93, C67–C82, and C72–C92.

It belongs to the alpha-defensin family.

Its subcellular location is the secreted. Functionally, this peptide has antibiotic, anti-fungi and antiviral activity. It also inhibits corticotropin (ACTH) stimulated corticosterone production. This chain is Corticostatin-3, found in Oryctolagus cuniculus (Rabbit).